The chain runs to 793 residues: ATP-dependent RNA helicase DRS1 (793 aa).

Positions 1–208 are disordered; that stretch reads MADDFITTID…TTTDPTLPSS (208 aa). Over residues 75-89 the composition is skewed to basic residues; the sequence is KRGKPIRAFKDRKRK. 3 stretches are compositionally biased toward acidic residues: residues 94–114, 122–144, and 152–184; these read ATSE…NDDS, SEED…ENEI, and ESDE…EETA. Residues 193-208 are compositionally biased toward low complexity; that stretch reads FFSSDPTTTDPTLPSS. The Q motif signature appears at 207–235; that stretch reads SSFTAMNLSRPLLRALTSLQFTAPTPIQA. The Helicase ATP-binding domain occupies 238-416; it reads IPLALLGRDI…KLSLDKPIRV (179 aa). 251 to 258 contacts ATP; that stretch reads AVTGSGKT. The short motif at 364 to 367 is the DEAD box element; that stretch reads DEAD. The 180-residue stretch at 427–606 folds into the Helicase C-terminal domain; the sequence is GLTQEFVRIR…EFKDDIQEIL (180 aa). Positions 560 to 630 form a coiled coil; that stretch reads EADRKMLKAA…EIKKGQNMVE (71 aa). Residues 645–793 form a disordered region; sequence QSGKEKQASK…KKGGKGKGRK (149 aa). Basic and acidic residues-rich tracts occupy residues 671 to 688 and 726 to 740; these read SAEK…DGLS and KITE…AGKG. Basic residues predominate over residues 741-752; that stretch reads KDKKKGKARRVT. Positions 761 to 771 are enriched in basic and acidic residues; sequence SEGKKSHEGMR. Positions 782 to 793 are enriched in basic residues; it reads GKKKGGKGKGRK.

The protein belongs to the DEAD box helicase family. DDX27/DRS1 subfamily. Associates with pre-ribosomal particles.

The protein resides in the nucleus. Its subcellular location is the nucleolus. It carries out the reaction ATP + H2O = ADP + phosphate + H(+). In terms of biological role, ATP-binding RNA helicase involved in ribosome assembly. This is ATP-dependent RNA helicase DRS1 (DRS1) from Cryptococcus neoformans var. neoformans serotype D (strain JEC21 / ATCC MYA-565) (Filobasidiella neoformans).